The primary structure comprises 346 residues: ATP-dependent (S)-NAD(P)H-hydrate dehydratase 2 (346 aa).

The segment at 1–20 is disordered; the sequence is MMVHSPLATGPHPTTHLEPT. The 312-residue stretch at 28–339 folds into the YjeF C-terminal domain; that stretch reads LLRKAFQMIP…GYIGEAFEQV (312 aa). Residues G135 and 188–194 each bind (6S)-NADPHX; that span reads NHVEFQR. ATP-binding positions include 228 to 232 and 248 to 257; these read KGSID and GSPKRCGGQG. D258 contributes to the (6S)-NADPHX binding site.

This sequence belongs to the NnrD/CARKD family. The cofactor is Mg(2+).

It is found in the cytoplasm. The catalysed reaction is (6S)-NADHX + ATP = ADP + phosphate + NADH + H(+). It catalyses the reaction (6S)-NADPHX + ATP = ADP + phosphate + NADPH + H(+). In terms of biological role, catalyzes the dehydration of the S-form of NAD(P)HX at the expense of ATP, which is converted to ADP. Together with NAD(P)HX epimerase, which catalyzes the epimerization of the S- and R-forms, the enzyme allows the repair of both epimers of NAD(P)HX, a damaged form of NAD(P)H that is a result of enzymatic or heat-dependent hydration. The chain is ATP-dependent (S)-NAD(P)H-hydrate dehydratase 2 from Puccinia graminis f. sp. tritici (strain CRL 75-36-700-3 / race SCCL) (Black stem rust fungus).